A 118-amino-acid polypeptide reads, in one-letter code: MGVSKVAIAVAVMLMVVVINHPAVVEGLTCGQVTGKLGGCLGYLKGGGYPSPACCGGVKGLNSLAKTPADRKQACACLKTLAGSVKGINYGAASALPGKCGIRIPYPISPSTDCSRVN.

The N-terminal stretch at 1-27 is a signal peptide; the sequence is MGVSKVAIAVAVMLMVVVINHPAVVEG. 4 cysteine pairs are disulfide-bonded: C30–C75, C40–C54, C55–C100, and C77–C114.

The protein belongs to the plant LTP family. In terms of processing, disulfide bonds.

In terms of biological role, plant non-specific lipid-transfer proteins transfer phospholipids as well as galactolipids across membranes. May play a role in wax or cutin deposition in the cell walls of expanding epidermal cells and certain secretory tissues. The protein is Non-specific lipid-transfer protein of Apium graveolens (Celery).